Reading from the N-terminus, the 345-residue chain is UPF0324 membrane protein CTC_01844 (345 aa).

10 helical membrane passes run 7–24 (YSVG…SGFI), 28–50 (IPYR…NPIV), 70–87 (LAII…VLEV), 91–113 (SLIV…GKLF), 120–142 (SGLI…SPVI), 152–174 (AISA…GKYF), 181–203 (YGLW…YAFS), 209–231 (FSVI…FSYI), 261–283 (IFPW…IIPN), and 316–338 (SGFA…SFLV).

The protein belongs to the UPF0324 family.

It localises to the cell membrane. This chain is UPF0324 membrane protein CTC_01844, found in Clostridium tetani (strain Massachusetts / E88).